The following is a 441-amino-acid chain: Tubulin beta-1 chain (441 aa).

GTP-binding residues include glutamine 11, glutamate 69, serine 138, glycine 142, threonine 143, glycine 144, asparagine 204, and asparagine 226. Glutamate 69 contributes to the Mg(2+) binding site.

Belongs to the tubulin family. In terms of assembly, dimer of alpha and beta chains. A typical microtubule is a hollow water-filled tube with an outer diameter of 25 nm and an inner diameter of 15 nM. Alpha-beta heterodimers associate head-to-tail to form protofilaments running lengthwise along the microtubule wall with the beta-tubulin subunit facing the microtubule plus end conferring a structural polarity. Microtubules usually have 13 protofilaments but different protofilament numbers can be found in some organisms and specialized cells. Mg(2+) serves as cofactor. As to expression, expressed primarily in touch receptor neurons.

The protein resides in the cytoplasm. The protein localises to the cytoskeleton. Its function is as follows. TTubulin is the major constituent of microtubules, a cylinder consisting of laterally associated linear protofilaments composed of alpha- and beta-tubulin heterodimers. Microtubules grow by the addition of GTP-tubulin dimers to the microtubule end, where a stabilizing cap forms. Below the cap, tubulin dimers are in GDP-bound state, owing to GTPase activity of alpha-tubulin. Plays a role in mechanosensory transduction (touch sensitivity). Mec-7 beta-tubulin is required for the production of 15-protofilament microtubules. The polypeptide is Tubulin beta-1 chain (mec-7) (Caenorhabditis elegans).